Reading from the N-terminus, the 363-residue chain is Peptide chain release factor 1 (363 aa).

N5-methylglutamine is present on Gln237.

Belongs to the prokaryotic/mitochondrial release factor family. Methylated by PrmC. Methylation increases the termination efficiency of RF1.

The protein localises to the cytoplasm. Peptide chain release factor 1 directs the termination of translation in response to the peptide chain termination codons UAG and UAA. The chain is Peptide chain release factor 1 from Hydrogenovibrio crunogenus (strain DSM 25203 / XCL-2) (Thiomicrospira crunogena).